The primary structure comprises 418 residues: D-amino acid dehydrogenase (418 aa).

3-17 (VLVLGAGVAGVSSAW) is an FAD binding site.

Belongs to the DadA oxidoreductase family. Requires FAD as cofactor.

It carries out the reaction a D-alpha-amino acid + A + H2O = a 2-oxocarboxylate + AH2 + NH4(+). It participates in amino-acid degradation; D-alanine degradation; NH(3) and pyruvate from D-alanine: step 1/1. Functionally, oxidative deamination of D-amino acids. This is D-amino acid dehydrogenase from Neisseria meningitidis serogroup C (strain 053442).